The following is a 384-amino-acid chain: 8-amino-7-oxononanoate synthase (384 aa).

Residue Arg21 coordinates substrate. 108–109 (GF) contributes to the pyridoxal 5'-phosphate binding site. His133 contributes to the substrate binding site. 3 residues coordinate pyridoxal 5'-phosphate: Ser179, His207, and Thr233. Lys236 is subject to N6-(pyridoxal phosphate)lysine. Substrate is bound at residue Thr352.

Belongs to the class-II pyridoxal-phosphate-dependent aminotransferase family. BioF subfamily. As to quaternary structure, homodimer. Pyridoxal 5'-phosphate is required as a cofactor.

The enzyme catalyses 6-carboxyhexanoyl-[ACP] + L-alanine + H(+) = (8S)-8-amino-7-oxononanoate + holo-[ACP] + CO2. It functions in the pathway cofactor biosynthesis; biotin biosynthesis. Catalyzes the decarboxylative condensation of pimeloyl-[acyl-carrier protein] and L-alanine to produce 8-amino-7-oxononanoate (AON), [acyl-carrier protein], and carbon dioxide. In Enterobacter sp. (strain 638), this protein is 8-amino-7-oxononanoate synthase.